The sequence spans 296 residues: Nucleotide-binding protein SUB0630 (296 aa).

Residue 13 to 20 participates in ATP binding; the sequence is GMSGAGKT. 63–66 contacts GTP; it reads DMRS.

Belongs to the RapZ-like family.

In terms of biological role, displays ATPase and GTPase activities. The chain is Nucleotide-binding protein SUB0630 from Streptococcus uberis (strain ATCC BAA-854 / 0140J).